Consider the following 202-residue polypeptide: NAD(P)H dehydrogenase (quinone) (202 aa).

In terms of domain architecture, Flavodoxin-like spans 7–193 (VLVLYYSMYG…TIARFQGRHF (187 aa)). FMN is bound by residues 13 to 18 (SMYGHI) and 82 to 84 (TRF). Tyrosine 15 serves as a coordination point for NAD(+). Tryptophan 102 is a substrate binding site. Residues 117–122 (STATGG) and histidine 137 each bind FMN.

Belongs to the WrbA family. The cofactor is FMN.

It catalyses the reaction a quinone + NADH + H(+) = a quinol + NAD(+). It carries out the reaction a quinone + NADPH + H(+) = a quinol + NADP(+). In Rhodospirillum rubrum (strain ATCC 11170 / ATH 1.1.1 / DSM 467 / LMG 4362 / NCIMB 8255 / S1), this protein is NAD(P)H dehydrogenase (quinone).